The sequence spans 290 residues: Inactive tau-tubulin kinase ttbk-6 (290 aa).

The Protein kinase domain maps to 1-240 (MEDHVLKKLN…FWQVMENEKI (240 aa)). Disordered regions lie at residues 244–263 (SKFDWENEEPDMSVPPAAWE) and 268–290 (RYFQSNPLEINGPPTPAEVDFVL).

It belongs to the protein kinase superfamily. CK1 Ser/Thr protein kinase family.

This is Inactive tau-tubulin kinase ttbk-6 from Caenorhabditis elegans.